The chain runs to 268 residues: Sexual development regulator velC (268 aa).

The segment covering 1 to 13 (MPHGFDKLLHPEP) has biased composition (basic and acidic residues). Disordered regions lie at residues 1–124 (MPHG…DNFS) and 142–165 (DPDP…NPPH). Pro residues predominate over residues 14 to 26 (EPQSPSPPPPPRR). The Velvet domain occupies 28 to 257 (STQSRYHLHI…ELGFVELKTR (230 aa)). Residues 92–121 (DGNRDREREREHERERERERETDGVARTDD) are compositionally biased toward basic and acidic residues.

Belongs to the velvet family. VelC subfamily. In terms of assembly, interacts with velA and vosA.

It is found in the nucleus. Functionally, velvet-domain-containing protein that acts as a positive regulator of sexual development. In Penicillium rubens (strain ATCC 28089 / DSM 1075 / NRRL 1951 / Wisconsin 54-1255) (Penicillium chrysogenum), this protein is Sexual development regulator velC.